A 182-amino-acid polypeptide reads, in one-letter code: ADP-ribosylation factor-like protein 11 (182 aa).

Gly2 carries N-myristoyl glycine lipidation. GTP contacts are provided by residues 19–26 (GLDSAGKT), 63–67 (DVGGQ), and 122–125 (NKQE).

The protein belongs to the small GTPase superfamily. Arf family.

May play a role in apoptosis. May act as a tumor suppressor. The protein is ADP-ribosylation factor-like protein 11 (ARL11) of Bos taurus (Bovine).